The chain runs to 177 residues: Bifunctional protein PyrR (177 aa).

Substrate is bound by residues 42-43, 104-112, and Arg137; these read SR and DDVLYTGRT. The PRPP-binding signature appears at 100–112; that stretch reads VVIVDDVLYTGRT.

It belongs to the purine/pyrimidine phosphoribosyltransferase family. PyrR subfamily.

It catalyses the reaction UMP + diphosphate = 5-phospho-alpha-D-ribose 1-diphosphate + uracil. Functionally, regulates the transcription of the pyrimidine nucleotide (pyr) operon in response to exogenous pyrimidines. Its function is as follows. Also displays a weak uracil phosphoribosyltransferase activity which is not physiologically significant. The protein is Bifunctional protein PyrR of Fusobacterium nucleatum subsp. nucleatum (strain ATCC 25586 / DSM 15643 / BCRC 10681 / CIP 101130 / JCM 8532 / KCTC 2640 / LMG 13131 / VPI 4355).